We begin with the raw amino-acid sequence, 548 residues long: Druantia protein DruB (548 aa).

It is found in the cytoplasm. Its function is as follows. Component of antiviral defense system Druantia type I, composed of DruA, DruB, DruC, DruD and DruE. Expression of Druantia in E.coli (strain MG1655) confers resistance to phage lambda, SECphi18, SECphi27 and T4. The chain is Druantia protein DruB from Escherichia coli (strain UMEA 4076-1).